The following is a 298-amino-acid chain: Small ribosomal subunit protein uS2 (298 aa).

The tract at residues 232–298 (ETFEGDDIPS…TAEAEEPAAE (67 aa)) is disordered. The segment covering 234–250 (FEGDDIPSAIDFEDETP) has biased composition (acidic residues). Residues 251 to 276 (EPVAEVADAEVAAAEPVAEAAPTAEA) show a composition bias toward low complexity.

This sequence belongs to the universal ribosomal protein uS2 family.

In Acaryochloris marina (strain MBIC 11017), this protein is Small ribosomal subunit protein uS2.